We begin with the raw amino-acid sequence, 352 residues long: Enhancer of mRNA-decapping protein 1 (352 aa).

Disordered stretches follow at residues 1–258 and 277–352; these read MMAH…PRNH and QYPQ…SSKS. Low complexity predominate over residues 71 to 80; sequence HTSSNTSNNK. 2 stretches are compositionally biased toward polar residues: residues 93–104 and 205–225; these read NFGNESSHQNGG and TEPNYHVNPQVNTPPQHSVNV. Residues 289-309 show a composition bias toward low complexity; the sequence is GGVYPMVAPQYQQQPQQHPQQ.

It belongs to the EDC family.

The protein resides in the cytoplasm. Functionally, mRNA-binding protein which stimulates mRNA decapping. The sequence is that of Enhancer of mRNA-decapping protein 1 (EDC1) from Debaryomyces hansenii (strain ATCC 36239 / CBS 767 / BCRC 21394 / JCM 1990 / NBRC 0083 / IGC 2968) (Yeast).